We begin with the raw amino-acid sequence, 549 residues long: Hydroxylamine reductase (549 aa).

Residues cysteine 3, cysteine 6, cysteine 15, and cysteine 21 each contribute to the [4Fe-4S] cluster site. Hybrid [4Fe-2O-2S] cluster contacts are provided by histidine 244, glutamate 268, cysteine 313, cysteine 405, cysteine 433, cysteine 458, glutamate 492, and lysine 494. Residue cysteine 405 is modified to Cysteine persulfide.

It belongs to the HCP family. [4Fe-4S] cluster is required as a cofactor. It depends on hybrid [4Fe-2O-2S] cluster as a cofactor.

It is found in the cytoplasm. It carries out the reaction A + NH4(+) + H2O = hydroxylamine + AH2 + H(+). In terms of biological role, catalyzes the reduction of hydroxylamine to form NH(3) and H(2)O. In Crocosphaera subtropica (strain ATCC 51142 / BH68) (Cyanothece sp. (strain ATCC 51142)), this protein is Hydroxylamine reductase.